The primary structure comprises 93 residues: Acylphosphatase (93 aa).

In terms of domain architecture, Acylphosphatase-like spans 6–93 (RAHVFISGRV…GEERGFSIIW (88 aa)). Active-site residues include R21 and N39.

It belongs to the acylphosphatase family.

The catalysed reaction is an acyl phosphate + H2O = a carboxylate + phosphate + H(+). This chain is Acylphosphatase (acyP), found in Roseiflexus sp. (strain RS-1).